A 530-amino-acid chain; its full sequence is uncharacterized protein (530 aa).

Residues 362-408 (NLTPKLNKTNEDIKSDSTSQPQGFPEGNRRVMENPETKVSKTDDEEM) are disordered. The span at 388-403 (GNRRVMENPETKVSKT) shows a compositional bias: basic and acidic residues.

Belongs to the IIV-6 030L family.

This is an uncharacterized protein from Invertebrate iridescent virus 6 (IIV-6).